A 319-amino-acid polypeptide reads, in one-letter code: Ribose-phosphate pyrophosphokinase (319 aa).

Residues 40–42 (DGE) and 99–100 (RQ) each bind ATP. Residues His134 and Asp174 each coordinate Mg(2+). Lys198 is a catalytic residue. Residues Arg200, Asp224, and 228–232 (DTAGT) contribute to the D-ribose 5-phosphate site.

This sequence belongs to the ribose-phosphate pyrophosphokinase family. Class I subfamily. Homohexamer. Requires Mg(2+) as cofactor.

It is found in the cytoplasm. It catalyses the reaction D-ribose 5-phosphate + ATP = 5-phospho-alpha-D-ribose 1-diphosphate + AMP + H(+). It functions in the pathway metabolic intermediate biosynthesis; 5-phospho-alpha-D-ribose 1-diphosphate biosynthesis; 5-phospho-alpha-D-ribose 1-diphosphate from D-ribose 5-phosphate (route I): step 1/1. In terms of biological role, involved in the biosynthesis of the central metabolite phospho-alpha-D-ribosyl-1-pyrophosphate (PRPP) via the transfer of pyrophosphoryl group from ATP to 1-hydroxyl of ribose-5-phosphate (Rib-5-P). This chain is Ribose-phosphate pyrophosphokinase, found in Coxiella burnetii (strain RSA 493 / Nine Mile phase I).